Reading from the N-terminus, the 174-residue chain is NADH-ubiquinone oxidoreductase chain 6 (174 aa).

A run of 4 helical transmembrane segments spans residues 25–45, 48–68, 82–102, and 143–163; these read SMGL…SIYV, FWFS…LFIY, FSLT…FFMI, and LITL…VKIT.

This sequence belongs to the complex I subunit 6 family.

The protein localises to the mitochondrion membrane. It carries out the reaction a ubiquinone + NADH + 5 H(+)(in) = a ubiquinol + NAD(+) + 4 H(+)(out). Core subunit of the mitochondrial membrane respiratory chain NADH dehydrogenase (Complex I) that is believed to belong to the minimal assembly required for catalysis. Complex I functions in the transfer of electrons from NADH to the respiratory chain. The immediate electron acceptor for the enzyme is believed to be ubiquinone. The sequence is that of NADH-ubiquinone oxidoreductase chain 6 (ND6) from Anopheles albimanus (New world malaria mosquito).